A 565-amino-acid chain; its full sequence is Phosphomethylpyrimidine synthase (565 aa).

Residues asparagine 203, methionine 232, tyrosine 261, histidine 297, 317 to 319 (SRG), 358 to 361 (DGLR), and glutamate 397 each bind substrate. Residue histidine 401 coordinates Zn(2+). Residue tyrosine 424 participates in substrate binding. Histidine 465 contributes to the Zn(2+) binding site. The [4Fe-4S] cluster site is built by cysteine 541, cysteine 544, and cysteine 549.

It belongs to the ThiC family. The cofactor is [4Fe-4S] cluster.

It catalyses the reaction 5-amino-1-(5-phospho-beta-D-ribosyl)imidazole + S-adenosyl-L-methionine = 4-amino-2-methyl-5-(phosphooxymethyl)pyrimidine + CO + 5'-deoxyadenosine + formate + L-methionine + 3 H(+). Its pathway is cofactor biosynthesis; thiamine diphosphate biosynthesis. Its function is as follows. Catalyzes the synthesis of the hydroxymethylpyrimidine phosphate (HMP-P) moiety of thiamine from aminoimidazole ribotide (AIR) in a radical S-adenosyl-L-methionine (SAM)-dependent reaction. This Bacteroides thetaiotaomicron (strain ATCC 29148 / DSM 2079 / JCM 5827 / CCUG 10774 / NCTC 10582 / VPI-5482 / E50) protein is Phosphomethylpyrimidine synthase.